Here is a 497-residue protein sequence, read N- to C-terminus: MIDDQRDMQVDSVNQEENVDSGETKQNTVTEVPRTVLQDVEANIAALMQATKQRDPRLVYRSLRTTSNICHRLNADVLGQLIKKYYSFDNSLKNELLELIDMPQNGDDSSTSITNGNGNTIFPEVDMYLQLLLSMTLYYNEKYEVGAEYIKKVIARLQSYDRRTLDQIAAKLYFYYILFFEKCNRSVECRNTLLSVHRTASLRHDSETQAMVLTLLLRNYIQFNLYDQADRLVSKTSFLTNASNNLAIRYQYYLGRIRAIQLDYTTAHEHLVSAIRKAPNTVYAVQFLEAVYKLHIVVQLLMGEIPERRIFRQKSLEKTLVPYLRISQAVRIGDLCAFTDALSKYEAEFRFDGLYTLICRLRHTVIKTGLRMISLSYSRISLRDVCIKLGLDSEESAEYIVAKGIRDGVIDASIDHSNAFMASNEAMDIYSTEQPQQAFHERIQFCLALHNDSIKSMRYPMDAHKSELEGVEEARRRMDKEMAEADLDDDEPDLGEF.

The segment at 1–27 (MIDDQRDMQVDSVNQEENVDSGETKQN) is disordered. A PCI domain is found at 248–428 (IRYQYYLGRI…AFMASNEAMD (181 aa)). The span at 470-483 (GVEEARRRMDKEMA) shows a compositional bias: basic and acidic residues. A disordered region spans residues 470-497 (GVEEARRRMDKEMAEADLDDDEPDLGEF). A compositionally biased stretch (acidic residues) spans 484–497 (EADLDDDEPDLGEF).

The protein belongs to the proteasome subunit S3 family. In terms of assembly, the 26S proteasome is composed of a core protease, known as the 20S proteasome, capped at one or both ends by the 19S regulatory complex (RC). The RC is composed of at least 18 different subunits in two subcomplexes, the base and the lid, which form the portions proximal and distal to the 20S proteolytic core, respectively.

Acts as a regulatory subunit of the 26 proteasome which is involved in the ATP-dependent degradation of ubiquitinated proteins. This is Probable 26S proteasome regulatory subunit rpn3 (rpn3) from Schizosaccharomyces pombe (strain 972 / ATCC 24843) (Fission yeast).